The following is a 118-amino-acid chain: Large ribosomal subunit protein bL20 (118 aa).

It belongs to the bacterial ribosomal protein bL20 family.

In terms of biological role, binds directly to 23S ribosomal RNA and is necessary for the in vitro assembly process of the 50S ribosomal subunit. It is not involved in the protein synthesizing functions of that subunit. The chain is Large ribosomal subunit protein bL20 from Stutzerimonas stutzeri (strain A1501) (Pseudomonas stutzeri).